A 725-amino-acid polypeptide reads, in one-letter code: Glutamine-dependent NAD(+) synthetase (725 aa).

Residues 4–274 (LKVATCNLNQ…VEVIISQVDL (271 aa)) form the CN hydrolase domain. Catalysis depends on Glu44, which acts as the Proton acceptor; for glutaminase activity. The For glutaminase activity role is filled by Lys113. Cys174 serves as the catalytic Nucleophile; for glutaminase activity. The ligase stretch occupies residues 324-709 (YHSPQEEIAF…FPEEEANSNK (386 aa)). 354 to 361 (PLSGGADS) contributes to the ATP binding site. Ser356 is a catalytic residue.

The protein in the C-terminal section; belongs to the NAD synthetase family.

It catalyses the reaction deamido-NAD(+) + L-glutamine + ATP + H2O = L-glutamate + AMP + diphosphate + NAD(+) + H(+). The protein operates within cofactor biosynthesis; NAD(+) biosynthesis; NAD(+) from deamido-NAD(+) (L-Gln route): step 1/1. The protein is Glutamine-dependent NAD(+) synthetase of Arabidopsis thaliana (Mouse-ear cress).